Consider the following 673-residue polypeptide: ATP-binding cassette sub-family G member 8 (673 aa).

Basic and acidic residues predominate over residues Met-1–Leu-11. The segment at Met-1–Asp-25 is disordered. Residues Met-1–Thr-416 are Cytoplasmic-facing. In terms of domain architecture, ABC transporter spans Leu-47–Arg-313. The ABC transmembrane type-2 domain occupies Phe-411–Ile-665. Residues Leu-417–Gly-437 traverse the membrane as a helical segment. The Extracellular portion of the chain corresponds to His-438 to Asp-447. A helical membrane pass occupies residues Thr-448–Ile-468. Topologically, residues Ser-469–Ile-497 are cytoplasmic. Residues Leu-498–Leu-518 form a helical membrane-spanning segment. Topologically, residues Ala-519–Pro-527 are extracellular. The chain crosses the membrane as a helical span at residues Phe-528–Ala-548. Over Ala-549–Thr-555 the chain is Cytoplasmic. Residues Phe-556–Phe-576 traverse the membrane as a helical segment. Over Met-577–Pro-639 the chain is Extracellular. N-linked (GlcNAc...) asparagine glycosylation is present at Asn-619. The helical transmembrane segment at Leu-640–Val-660 threads the bilayer. The Cytoplasmic segment spans residues Ser-661–Trp-673.

The protein belongs to the ABC transporter superfamily. ABCG family. Eye pigment precursor importer (TC 3.A.1.204) subfamily. Heterodimer with ABCG8. Mg(2+) is required as a cofactor. In terms of processing, N-glycosylated. As to expression, predominantly expressed in the liver. Low expression levels in the small intestine and colon. Very low levels in other tissues, including brain, heart and spleen.

The protein resides in the cell membrane. It localises to the apical cell membrane. The catalysed reaction is cholesterol(in) + ATP + H2O = cholesterol(out) + ADP + phosphate + H(+). It catalyses the reaction sitosterol(in) + ATP + H2O = sitosterol(out) + ADP + phosphate + H(+). Its activity is regulated as follows. The ATPase activity of the heterodimer is stimulated by cholate. Taurocholate, glycocholate, taurochenodeoxycholate, glycochenodeoxycholate and taurodeoxycholate also stimulate ATPase activity, but to a lower degree. Glycodeoxycholate has no significant effect on ATPase activity. ATPase activity is inhibited by vanadate and by berillium fluoride. Functionally, ABCG5 and ABCG8 form an obligate heterodimer that mediates Mg(2+)- and ATP-dependent sterol transport across the cell membrane. Plays an essential role in the selective transport of the dietary cholesterol in and out of the enterocytes and in the selective sterol excretion by the liver into bile. Required for normal sterol homeostasis. The heterodimer with ABCG5 has ATPase activity. The chain is ATP-binding cassette sub-family G member 8 from Homo sapiens (Human).